Here is a 237-residue protein sequence, read N- to C-terminus: Demethylmenaquinone methyltransferase (237 aa).

Residues T58, D79, and 106–107 (NA) each bind S-adenosyl-L-methionine.

The protein belongs to the class I-like SAM-binding methyltransferase superfamily. MenG/UbiE family.

It carries out the reaction a 2-demethylmenaquinol + S-adenosyl-L-methionine = a menaquinol + S-adenosyl-L-homocysteine + H(+). It participates in quinol/quinone metabolism; menaquinone biosynthesis; menaquinol from 1,4-dihydroxy-2-naphthoate: step 2/2. In terms of biological role, methyltransferase required for the conversion of demethylmenaquinol (DMKH2) to menaquinol (MKH2). The sequence is that of Demethylmenaquinone methyltransferase from Listeria monocytogenes serotype 4a (strain HCC23).